A 302-amino-acid polypeptide reads, in one-letter code: uncharacterized protein (302 aa).

This is an uncharacterized protein from Haemophilus influenzae (strain ATCC 51907 / DSM 11121 / KW20 / Rd).